The sequence spans 226 residues: ATP synthase subunit a 1 (226 aa).

5 helical membrane-spanning segments follow: residues 20–40 (LTIV…WLIT), 78–98 (YLPF…CTVI), 113–133 (ALAL…SGLV), 174–194 (MILV…MNIL), and 196–216 (LLTG…YIAA).

It belongs to the ATPase A chain family. In terms of assembly, F-type ATPases have 2 components, CF(1) - the catalytic core - and CF(0) - the membrane proton channel. CF(1) has five subunits: alpha(3), beta(3), gamma(1), delta(1), epsilon(1). CF(0) has four main subunits: a, b, b' and c.

Its subcellular location is the cell inner membrane. In terms of biological role, key component of the proton channel; it plays a direct role in the translocation of protons across the membrane. The protein is ATP synthase subunit a 1 of Chlorobaculum parvum (strain DSM 263 / NCIMB 8327) (Chlorobium vibrioforme subsp. thiosulfatophilum).